The chain runs to 78 residues: Acyl carrier protein (78 aa).

A Carrier domain is found at 2-77 (SDIEARVKKI…NAIDYANTHQ (76 aa)). Serine 37 is subject to O-(pantetheine 4'-phosphoryl)serine.

Belongs to the acyl carrier protein (ACP) family. In terms of processing, 4'-phosphopantetheine is transferred from CoA to a specific serine of apo-ACP by AcpS. This modification is essential for activity because fatty acids are bound in thioester linkage to the sulfhydryl of the prosthetic group.

The protein localises to the cytoplasm. The protein operates within lipid metabolism; fatty acid biosynthesis. Its function is as follows. Carrier of the growing fatty acid chain in fatty acid biosynthesis. The polypeptide is Acyl carrier protein (Comamonas testosteroni (Pseudomonas testosteroni)).